Here is a 346-residue protein sequence, read N- to C-terminus: fMet-Leu-Phe receptor (346 aa).

Asparagine 1 and asparagine 7 each carry an N-linked (GlcNAc...) asparagine glycan. Residues asparagine 1–isoleucine 24 lie on the Extracellular side of the membrane. Residues valine 25–valine 47 form a helical membrane-spanning segment. The Cytoplasmic portion of the chain corresponds to alanine 48 to threonine 58. Residues isoleucine 59 to valine 80 form a helical membrane-spanning segment. The Extracellular portion of the chain corresponds to lysine 81–phenylalanine 97. Cysteines 95 and 173 form a disulfide. A helical membrane pass occupies residues isoleucine 98 to leucine 118. At aspartate 119 to serine 137 the chain is on the cytoplasmic side. A helical membrane pass occupies residues leucine 138–isoleucine 159. The Extracellular portion of the chain corresponds to arginine 160–arginine 202. Residues phenylalanine 203 to threonine 223 form a helical membrane-spanning segment. The Cytoplasmic portion of the chain corresponds to lysine 224–valine 239. Residues leucine 240–valine 263 form a helical membrane-spanning segment. At arginine 264–valine 282 the chain is on the extracellular side. The chain crosses the membrane as a helical span at residues threonine 283–glycine 302. Topologically, residues glutamine 303–alanine 346 are cytoplasmic. Residues threonine 322–alanine 346 form a disordered region. Residues glutamate 323–proline 338 show a composition bias toward polar residues.

It belongs to the G-protein coupled receptor 1 family. In terms of processing, phosphorylated; which is necessary for desensitization.

It localises to the cell membrane. High affinity receptor for N-formyl-methionyl peptides (fMLP), which are powerful neutrophil chemotactic factors. Binding of fMLP to the receptor stimulates intracellular calcium mobilization and superoxide anion release. This response is mediated via a G-protein that activates a phosphatidylinositol-calcium second messenger system. Receptor for TAFA4, mediates its effects on chemoattracting macrophages, promoting phagocytosis and increasing ROS release. Receptor for cathepsin CTSG, leading to increased phagocyte chemotaxis. The sequence is that of fMet-Leu-Phe receptor (FPR1) from Gorilla gorilla gorilla (Western lowland gorilla).